Consider the following 230-residue polypeptide: Osmotin-like protein PR-5x (230 aa).

A signal peptide spans 1–25 (MYTNMGYLTSSFIFFFLALVTYTYA). 8 disulfides stabilise this stretch: Cys34–Cys229, Cys76–Cys86, Cys91–Cys97, Cys145–Cys217, Cys150–Cys200, Cys158–Cys168, Cys172–Cys181, and Cys182–Cys187.

It belongs to the thaumatin family.

The protein localises to the secreted. It is found in the vacuole. The catalysed reaction is Endohydrolysis of (1-&gt;3)- or (1-&gt;4)-linkages in beta-D-glucans when the glucose residue whose reducing group is involved in the linkage to be hydrolyzed is itself substituted at C-3.. Its function is as follows. Antifungal protein. May bind to beta-glucans and have beta-1,3-D-glucanase activity. This chain is Osmotin-like protein PR-5x, found in Solanum lycopersicum (Tomato).